Consider the following 389-residue polypeptide: P2X purinoceptor 4a (389 aa).

Residues 1 to 36 (MSESVGCCDSVSQCFFDYYTSKILIIRSKKVGTLNR) lie on the Cytoplasmic side of the membrane. The helical transmembrane segment at 37 to 57 (FTQALVIAYVIGYVCVYNKGY) threads the bilayer. The Extracellular portion of the chain corresponds to 58-343 (QDTDTVLSSV…NIIPTLLNMG (286 aa)). ATP is bound by residues lysine 70 and lysine 72. Positions 70 and 72 each coordinate CTP. 2 N-linked (GlcNAc...) asparagine glycosylation sites follow: asparagine 78 and asparagine 113. Intrachain disulfides connect cysteine 119–cysteine 168, cysteine 129–cysteine 152, and cysteine 135–cysteine 162. CTP is bound at residue arginine 143. N-linked (GlcNAc...) asparagine glycosylation occurs at asparagine 187. ATP-binding residues include threonine 189 and leucine 191. Threonine 189 is a CTP binding site. A glycan (N-linked (GlcNAc...) asparagine) is linked at asparagine 213. Cystine bridges form between cysteine 220-cysteine 230 and cysteine 264-cysteine 273. Residues asparagine 296, arginine 298, and lysine 316 each contribute to the ATP site. 3 residues coordinate CTP: asparagine 296, arginine 298, and lysine 316. Residues 344 to 364 (AGLALLGLVNVICDWIVLTFM) form a helical membrane-spanning segment. The Cytoplasmic portion of the chain corresponds to 365–389 (KRKQHYKEQKYTYVDDFGLLHNEDK).

It belongs to the P2X receptor family. Functional P2XRs are organized as homomeric and heteromeric trimers. Forms homotrimer.

The protein localises to the cell membrane. It is found in the lysosome membrane. It carries out the reaction K(+)(in) = K(+)(out). The catalysed reaction is Na(+)(in) = Na(+)(out). It catalyses the reaction Ca(2+)(in) = Ca(2+)(out). Activated by ATP. pH-dependent and inhibited by acidic pH. Its function is as follows. ATP-gated nonselective transmembrane cation channel permeable to potassium, sodium and calcium. CTP, but not GTP or UTP, functions as a weak affinity agonist for P2RX4. Activated by extracellularly released ATP, it plays multiple role in immunity and central nervous system physiology. Could also function as an ATP-gated cation channel of lysosomal membranes. The chain is P2X purinoceptor 4a (p2rx4a) from Danio rerio (Zebrafish).